Here is a 307-residue protein sequence, read N- to C-terminus: D-alanine--D-alanine ligase (307 aa).

An ATP-grasp domain is found at 105–304 (KMLWKGFGLP…FEKLVEKILE (200 aa)). Residue 135–190 (VARLGLPLMVKPSREGSSVGLTKVDSADKLKSAVDLALKFDDIVLIEEWLSGDELT) participates in ATP binding. Mg(2+) contacts are provided by aspartate 258, glutamate 271, and asparagine 273.

It belongs to the D-alanine--D-alanine ligase family. Mg(2+) is required as a cofactor. It depends on Mn(2+) as a cofactor.

It localises to the cytoplasm. The enzyme catalyses 2 D-alanine + ATP = D-alanyl-D-alanine + ADP + phosphate + H(+). It functions in the pathway cell wall biogenesis; peptidoglycan biosynthesis. In terms of biological role, cell wall formation. The sequence is that of D-alanine--D-alanine ligase from Actinobacillus succinogenes (strain ATCC 55618 / DSM 22257 / CCUG 43843 / 130Z).